The following is a 457-amino-acid chain: Succinate-semialdehyde dehydrogenase [NADP(+)] (457 aa).

NADP(+)-binding positions include 133–134, 157–160, and 209–210; these read WN, KHAS, and GS. Catalysis depends on Glu231, which acts as the Proton acceptor. Position 232 (Leu232) interacts with NADP(+). The active-site Nucleophile is the Cys265. Glu362 serves as a coordination point for NADP(+).

Belongs to the aldehyde dehydrogenase family.

The catalysed reaction is succinate semialdehyde + NADP(+) + H2O = succinate + NADPH + 2 H(+). Functionally, catalyzes the NADP(+)-dependent oxidation of succinate semialdehyde to succinate. It is believed to be the main source of succinate semialdehyde dehydrogenase activity in Mycobacterium. This chain is Succinate-semialdehyde dehydrogenase [NADP(+)] (gabD1), found in Mycobacterium leprae (strain TN).